The following is a 32-amino-acid chain: VVIKTLVFQSESNNSFVELIPMKPLNLRAFXL.

Positions Val2–Leu32 constitute a Pentraxin (PTX) domain.

It belongs to the pentraxin family. Homopentamer. Pentraxin (or pentaxin) have a discoid arrangement of 5 non-covalently bound subunits. Glycosylated.

It localises to the secreted. In terms of biological role, displays several functions associated with host defense: it promotes agglutination, bacterial capsular swelling, phagocytosis, and complement fixation through its calcium-dependent binding to phosphorylcholine. The polypeptide is C-reactive protein (Pleuronectes platessa (European plaice)).